A 353-amino-acid polypeptide reads, in one-letter code: uncharacterized protein (353 aa).

The chain crosses the membrane as a helical span at residues 267-287 (GLPLVVIEAMAFGLPIVAFNC).

The protein belongs to the glycosyltransferase group 1 family. Glycosyltransferase 4 subfamily.

It is found in the membrane. This is an uncharacterized protein from Haemophilus influenzae (strain ATCC 51907 / DSM 11121 / KW20 / Rd).